We begin with the raw amino-acid sequence, 205 residues long: Methyltransferase-like 26 B (205 aa).

This sequence belongs to the UPF0585 family.

This Danio rerio (Zebrafish) protein is Methyltransferase-like 26 B.